The primary structure comprises 309 residues: Aspartate carbamoyltransferase catalytic subunit (309 aa).

Carbamoyl phosphate-binding residues include Arg58 and Thr59. Lys86 is a binding site for L-aspartate. Positions 108, 136, and 139 each coordinate carbamoyl phosphate. Positions 169 and 223 each coordinate L-aspartate. 2 residues coordinate carbamoyl phosphate: Gly265 and Pro266.

It belongs to the aspartate/ornithine carbamoyltransferase superfamily. ATCase family. As to quaternary structure, heterododecamer (2C3:3R2) of six catalytic PyrB chains organized as two trimers (C3), and six regulatory PyrI chains organized as three dimers (R2).

It carries out the reaction carbamoyl phosphate + L-aspartate = N-carbamoyl-L-aspartate + phosphate + H(+). Its pathway is pyrimidine metabolism; UMP biosynthesis via de novo pathway; (S)-dihydroorotate from bicarbonate: step 2/3. Functionally, catalyzes the condensation of carbamoyl phosphate and aspartate to form carbamoyl aspartate and inorganic phosphate, the committed step in the de novo pyrimidine nucleotide biosynthesis pathway. The sequence is that of Aspartate carbamoyltransferase catalytic subunit from Akkermansia muciniphila (strain ATCC BAA-835 / DSM 22959 / JCM 33894 / BCRC 81048 / CCUG 64013 / CIP 107961 / Muc).